Consider the following 138-residue polypeptide: Large ribosomal subunit protein uL16 (138 aa).

Belongs to the universal ribosomal protein uL16 family. In terms of assembly, part of the 50S ribosomal subunit.

Binds 23S rRNA and is also seen to make contacts with the A and possibly P site tRNAs. This Anaeromyxobacter dehalogenans (strain 2CP-C) protein is Large ribosomal subunit protein uL16.